A 474-amino-acid polypeptide reads, in one-letter code: MRIYNTATRQVEEFTTYVPRLARGYVCGITPYDHMHVGHGRVYVFFDIFRRYLERLGYEVRLVINFTDIDDKIVNKAREEFGHEAYKRWREVPERYIAEYFEMTRRLYIKPAYAYPKVTENVEDMVKWISTLVEKGYAYVAPDGSVYFEVAKVPNYGVLSRQKIEELIAGARVEPEPGKRNPLDFALWKSWTPGEPWWNSPWCPGRPGWHLECVVMSTKHLGAPFDFHGGGADLIFPHHENEIAIARAYFGVDNFARYWIHVGYLTVRGEKMSKSLGNIITLREVLSKHSGEALRLAYAMSHYRKPMEFTYELLQQAEDMAKTLYTAYDELSQALRDAGEKDQEPIAQEALKYAGAFYGALDDDMSTPEAVQQLYGMARYIISTVLHRVEKISRETALAVLNKYVEMADVLGVLERRQIPKELEEAVKALVETRARLRQERQYQLADYIRQRLAELGVELHDFGPRTYYTYRRA.

Zn(2+) is bound at residue cysteine 27. Residues 29–39 carry the 'HIGH' region motif; that stretch reads ITPYDHMHVGH. Zn(2+) is bound by residues cysteine 213, histidine 238, and glutamate 242. A 'KMSKS' region motif is present at residues 271 to 275; the sequence is KMSKS. Position 274 (lysine 274) interacts with ATP.

This sequence belongs to the class-I aminoacyl-tRNA synthetase family. Zn(2+) is required as a cofactor.

It localises to the cytoplasm. The catalysed reaction is tRNA(Cys) + L-cysteine + ATP = L-cysteinyl-tRNA(Cys) + AMP + diphosphate. The protein is Cysteine--tRNA ligase of Pyrobaculum neutrophilum (strain DSM 2338 / JCM 9278 / NBRC 100436 / V24Sta) (Thermoproteus neutrophilus).